The chain runs to 109 residues: Tetracenomycin F2 cyclase (109 aa).

As to quaternary structure, homodimer.

The catalysed reaction is tetracenomycin F2 + H(+) = tetracenomycin F1 + H2O. Its pathway is antibiotic biosynthesis; tetracenomycin C biosynthesis. Functionally, catalyzing the conversion of tetracenomycin F2 to tetracenomycin F1. The polypeptide is Tetracenomycin F2 cyclase (tcmI) (Streptomyces glaucescens).